The chain runs to 151 residues: Cysteine protease inhibitor 5 (151 aa).

2 disulfides stabilise this stretch: Cys13/Cys65 and Cys114/Cys120.

The protein belongs to the protease inhibitor I3 (leguminous Kunitz-type inhibitor) family.

Its subcellular location is the vacuole. In terms of biological role, inhibitor of cysteine proteases. May protect the plant by inhibiting proteases of invading organisms. This chain is Cysteine protease inhibitor 5, found in Solanum tuberosum (Potato).